Here is a 195-residue protein sequence, read N- to C-terminus: Archaetidylinositol phosphate synthase (195 aa).

2 helical membrane-spanning segments follow: residues 27 to 47 (IALP…AASA) and 54 to 74 (LITG…DGAV). Mg(2+) is bound by residues Asp-68, Asp-71, Asp-89, and Asp-93. Residue Asp-93 is the Proton acceptor of the active site. 2 helical membrane passes run 99-119 (IIII…LLAL) and 158-178 (LAGY…LAAL).

It belongs to the CDP-alcohol phosphatidyltransferase class-I family. It depends on Mn(2+) as a cofactor. The cofactor is Mg(2+).

The protein resides in the cell membrane. The enzyme catalyses CDP-2,3-bis-O-(phytanyl)-sn-glycerol + 1D-myo-inositol 3-phosphate = saturated 1-archaetidyl-1D-myo-inositol 3-phosphate + CMP + H(+). It participates in lipid metabolism; phospholipid metabolism. Its function is as follows. Catalyzes the formation of archaetidylinositol phosphate (AIP) from CDP-archaeol (CDP-ArOH or CDP-2,3-bis-(O-phytanyl)-sn-glycerol) and 1L-myo-inositol 1-phosphate (IP or 1D-myo-inositol 3-phosphate). AIP is a precursor of archaetidyl-myo-inositol (AI), an ether-type inositol phospholipid ubiquitously distributed in archaea membranes and essential for glycolipid biosynthesis in archaea. The chain is Archaetidylinositol phosphate synthase from Methanothermobacter thermautotrophicus (strain ATCC 29096 / DSM 1053 / JCM 10044 / NBRC 100330 / Delta H) (Methanobacterium thermoautotrophicum).